The following is a 1400-amino-acid chain: DNA-directed RNA polymerase subunit beta' (1400 aa).

Residues C71, C73, C86, and C89 each contribute to the Zn(2+) site. Residues D462, D464, and D466 each coordinate Mg(2+). Positions 811, 885, 892, and 895 each coordinate Zn(2+).

The protein belongs to the RNA polymerase beta' chain family. The RNAP catalytic core consists of 2 alpha, 1 beta, 1 beta' and 1 omega subunit. When a sigma factor is associated with the core the holoenzyme is formed, which can initiate transcription. The cofactor is Mg(2+). Zn(2+) is required as a cofactor.

It carries out the reaction RNA(n) + a ribonucleoside 5'-triphosphate = RNA(n+1) + diphosphate. Its function is as follows. DNA-dependent RNA polymerase catalyzes the transcription of DNA into RNA using the four ribonucleoside triphosphates as substrates. This is DNA-directed RNA polymerase subunit beta' from Brucella suis (strain ATCC 23445 / NCTC 10510).